The chain runs to 165 residues: Ribosome maturation factor RimM (165 aa).

The PRC barrel domain maps to 94–165; sequence EDEFYIADLT…YVILNYQREA (72 aa).

Belongs to the RimM family. In terms of assembly, binds ribosomal protein uS19.

Its subcellular location is the cytoplasm. An accessory protein needed during the final step in the assembly of 30S ribosomal subunit, possibly for assembly of the head region. Essential for efficient processing of 16S rRNA. May be needed both before and after RbfA during the maturation of 16S rRNA. It has affinity for free ribosomal 30S subunits but not for 70S ribosomes. This chain is Ribosome maturation factor RimM, found in Rickettsia rickettsii (strain Sheila Smith).